A 197-amino-acid polypeptide reads, in one-letter code: Transmembrane 4 L6 family member 5 (197 aa).

The Cytoplasmic segment spans residues 1–9 (MCTGKCARC). The chain crosses the membrane as a helical span at residues 10 to 30 (VGLSLITLCLVCIVANALLLV). Residues 31–46 (PNGETSWTNTNHLSLQ) are Extracellular-facing. A helical transmembrane segment spans residues 47–67 (VWLMGGFIGGGLMVLCPGIAA). Over 68-90 (VRAGGKGCCGAGCCGNRCRMLRS) the chain is Cytoplasmic. Residues 91-111 (VFSSAFGVLGAIYCLSVSGAG) traverse the membrane as a helical segment. The segment at 91-197 (VFSSAFGVLG…DCRKKQDTPH (107 aa)) is interaction with MTOR and CASTOR1. Residues 112–157 (LRNGPRCLMNGEWGYHFEDTAGAYLLNRTLWDRCEAPPRVVPWNVT) lie on the Extracellular side of the membrane. 124 to 129 (WGYHFE) serves as a coordination point for L-arginine. Residues asparagine 138 and asparagine 155 are each glycosylated (N-linked (GlcNAc...) asparagine). The helical transmembrane segment at 158 to 178 (LFSLLVAASCLEIVLCGIQLV) threads the bilayer. Over 179-197 (NATIGVFCGDCRKKQDTPH) the chain is Cytoplasmic.

The protein belongs to the L6 tetraspanin family. In terms of assembly, interacts with MTOR; the interaction is positively regulated by arginine and is negatively regulated by leucine. Interacts with SLC38A9. Interacts with SLC7A1; the interaction is negatively regulated by arginine. Interacts with CASTOR1; the interaction is positively regulated by leucine and is negatively regulated by arginine. As to expression, intestine. Overexpressed in pancreatic cancers.

Its subcellular location is the lysosome membrane. The protein localises to the cell membrane. Acts as a lysosomal membrane arginine sensor. Forms a complex with MTOR and SLC38A9 on lysosomal membranes in an arginine-regulated manner, leading to arginine efflux which enables the activation of mTORC1 which subsequently leads to RPS6KB1 and EIF4EBP1 phosphorylations. Facilitates cell cycle G1/S phase progression and the translocation of the CDK4-CCND1 complex into the nucleus. CDKN1B and RHOA/ROCK signaling activity are involved in TM4SF5-mediated acceleration of G1/S phase progression. The polypeptide is Transmembrane 4 L6 family member 5 (TM4SF5) (Homo sapiens (Human)).